Consider the following 27-residue polypeptide: Pregnancy-associated glycoprotein 62 (27 aa).

Belongs to the peptidase A1 family. Glycosylated. In terms of tissue distribution, placenta.

The chain is Pregnancy-associated glycoprotein 62 (PAG62) from Capra hircus (Goat).